Reading from the N-terminus, the 419-residue chain is 2-amino-3-ketobutyrate coenzyme A ligase, mitochondrial (419 aa).

A mitochondrion-targeting transit peptide spans 1-21 (MWAGRVLHAALSRAPRESRAQ). An N6-acetyllysine; alternate modification is found at Lys45. Lys45 is subject to N6-succinyllysine; alternate. 134–135 (CF) contributes to the pyridoxal 5'-phosphate binding site. His159 contacts substrate. Residue Lys187 is modified to N6-acetyllysine; alternate. Residue Lys187 is modified to N6-succinyllysine; alternate. Residues Ser206, 231–234 (DESH), 262–265 (TLGK), and 295–296 (SN) each bind pyridoxal 5'-phosphate. An N6-(pyridoxal phosphate)lysine modification is found at Lys265. N6-succinyllysine occurs at positions 326 and 368. N6-acetyllysine; alternate is present on Lys383. Position 383 is an N6-succinyllysine; alternate (Lys383). Residue Arg389 participates in substrate binding.

It belongs to the class-II pyridoxal-phosphate-dependent aminotransferase family. Pyridoxal 5'-phosphate serves as cofactor.

The protein resides in the mitochondrion. Its subcellular location is the nucleus. It carries out the reaction glycine + acetyl-CoA = (2S)-2-amino-3-oxobutanoate + CoA. It participates in amino-acid degradation; L-threonine degradation via oxydo-reductase pathway; glycine from L-threonine: step 2/2. Functionally, pyridoxal phosphate (PLP) dependent enzyme, which catalyzes the cleavage of 2-amino-3-oxobutanoate to glycine and acetyl-CoA. Catalyzes the second reaction step on the main metabolic degradation pathway for L-threonine. This is 2-amino-3-ketobutyrate coenzyme A ligase, mitochondrial (GCAT) from Bos taurus (Bovine).